The following is a 785-amino-acid chain: Endonuclease MutS2 (785 aa).

332–339 (GPNTGGKT) provides a ligand contact to ATP. Positions 710–785 (IDLRGLDAEE…GDGATIVELK (76 aa)) constitute a Smr domain.

The protein belongs to the DNA mismatch repair MutS family. MutS2 subfamily. Homodimer. Binds to stalled ribosomes, contacting rRNA.

Its function is as follows. Endonuclease that is involved in the suppression of homologous recombination and thus may have a key role in the control of bacterial genetic diversity. Acts as a ribosome collision sensor, splitting the ribosome into its 2 subunits. Detects stalled/collided 70S ribosomes which it binds and splits by an ATP-hydrolysis driven conformational change. Acts upstream of the ribosome quality control system (RQC), a ribosome-associated complex that mediates the extraction of incompletely synthesized nascent chains from stalled ribosomes and their subsequent degradation. Probably generates substrates for RQC. The protein is Endonuclease MutS2 of Clostridium botulinum (strain Eklund 17B / Type B).